Consider the following 179-residue polypeptide: Inner membrane-spanning protein YciB (179 aa).

The next 5 membrane-spanning stretches (helical) occupy residues isoleucine 22 to valine 42, methionine 50 to asparagine 70, tryptophan 76 to methionine 96, leucine 121 to leucine 141, and phenylalanine 149 to isoleucine 169.

This sequence belongs to the YciB family.

It localises to the cell inner membrane. Functionally, plays a role in cell envelope biogenesis, maintenance of cell envelope integrity and membrane homeostasis. The polypeptide is Inner membrane-spanning protein YciB (Escherichia fergusonii (strain ATCC 35469 / DSM 13698 / CCUG 18766 / IAM 14443 / JCM 21226 / LMG 7866 / NBRC 102419 / NCTC 12128 / CDC 0568-73)).